A 443-amino-acid polypeptide reads, in one-letter code: Proline--tRNA ligase (443 aa).

Belongs to the class-II aminoacyl-tRNA synthetase family. ProS type 2 subfamily. In terms of assembly, homodimer.

It is found in the cytoplasm. The enzyme catalyses tRNA(Pro) + L-proline + ATP = L-prolyl-tRNA(Pro) + AMP + diphosphate. Functionally, catalyzes the attachment of proline to tRNA(Pro) in a two-step reaction: proline is first activated by ATP to form Pro-AMP and then transferred to the acceptor end of tRNA(Pro). The polypeptide is Proline--tRNA ligase (Caulobacter vibrioides (strain ATCC 19089 / CIP 103742 / CB 15) (Caulobacter crescentus)).